The following is a 174-amino-acid chain: 3-hydroxydecanoyl-[acyl-carrier-protein] dehydratase (174 aa).

H73 is a catalytic residue.

Belongs to the thioester dehydratase family. FabA subfamily. Homodimer.

The protein resides in the cytoplasm. The enzyme catalyses a (3R)-hydroxyacyl-[ACP] = a (2E)-enoyl-[ACP] + H2O. The catalysed reaction is (3R)-hydroxydecanoyl-[ACP] = (2E)-decenoyl-[ACP] + H2O. It catalyses the reaction (2E)-decenoyl-[ACP] = (3Z)-decenoyl-[ACP]. Its pathway is lipid metabolism; fatty acid biosynthesis. Necessary for the introduction of cis unsaturation into fatty acids. Catalyzes the dehydration of (3R)-3-hydroxydecanoyl-ACP to E-(2)-decenoyl-ACP and then its isomerization to Z-(3)-decenoyl-ACP. Can catalyze the dehydratase reaction for beta-hydroxyacyl-ACPs with saturated chain lengths up to 16:0, being most active on intermediate chain length. This is 3-hydroxydecanoyl-[acyl-carrier-protein] dehydratase from Saccharophagus degradans (strain 2-40 / ATCC 43961 / DSM 17024).